A 109-amino-acid polypeptide reads, in one-letter code: Protein reprimo (109 aa).

N-linked (GlcNAc...) asparagine glycosylation is found at N7 and N18. Residues 56–76 traverse the membrane as a helical segment; the sequence is VVQIAVMCVLSLTVVFGIFFL. Residue S98 is modified to Phosphoserine.

Belongs to the reprimo family.

The protein localises to the cytoplasm. It is found in the membrane. May be involved in the regulation of p53-dependent G2 arrest of the cell cycle. Seems to induce cell cycle arrest by inhibiting CDK1 activity and nuclear translocation of the CDC2 cyclin B1 complex. This Mus musculus (Mouse) protein is Protein reprimo (Rprm).